Consider the following 687-residue polypeptide: Polyphosphate kinase (687 aa).

An ATP-binding site is contributed by N45. Mg(2+)-binding residues include R375 and R405. H435 acts as the Phosphohistidine intermediate in catalysis. Positions 472, 568, and 596 each coordinate ATP.

The protein belongs to the polyphosphate kinase 1 (PPK1) family. Mg(2+) is required as a cofactor. Post-translationally, an intermediate of this reaction is the autophosphorylated ppk in which a phosphate is covalently linked to a histidine residue through a N-P bond.

It catalyses the reaction [phosphate](n) + ATP = [phosphate](n+1) + ADP. In terms of biological role, catalyzes the reversible transfer of the terminal phosphate of ATP to form a long-chain polyphosphate (polyP). In Burkholderia ambifaria (strain MC40-6), this protein is Polyphosphate kinase.